The chain runs to 217 residues: Cytidylate kinase (217 aa).

Residue 11–19 participates in ATP binding; that stretch reads GPAGAGKST.

It belongs to the cytidylate kinase family. Type 1 subfamily.

The protein localises to the cytoplasm. The enzyme catalyses CMP + ATP = CDP + ADP. The catalysed reaction is dCMP + ATP = dCDP + ADP. This chain is Cytidylate kinase, found in Clostridium perfringens (strain ATCC 13124 / DSM 756 / JCM 1290 / NCIMB 6125 / NCTC 8237 / Type A).